The following is a 405-amino-acid chain: Bifunctional enzyme IspD/IspF (405 aa).

A 2-C-methyl-D-erythritol 4-phosphate cytidylyltransferase region spans residues 1–240; that stretch reads MTLADKPVLS…KLLLDEPKYR (240 aa). A 2-C-methyl-D-erythritol 2,4-cyclodiphosphate synthase region spans residues 240–405; sequence RVGTGYDIHR…LLYKIAPLHN (166 aa). 2 residues coordinate a divalent metal cation: D246 and H248. 4-CDP-2-C-methyl-D-erythritol 2-phosphate is bound by residues 246–248 and 277–278; these read DIH and HS. A divalent metal cation is bound at residue H285. Residues 299-301, 375-378, and R385 contribute to the 4-CDP-2-C-methyl-D-erythritol 2-phosphate site; these read DIG and TTTE.

It in the N-terminal section; belongs to the IspD/TarI cytidylyltransferase family. IspD subfamily. In the C-terminal section; belongs to the IspF family. Requires a divalent metal cation as cofactor.

The enzyme catalyses 2-C-methyl-D-erythritol 4-phosphate + CTP + H(+) = 4-CDP-2-C-methyl-D-erythritol + diphosphate. It catalyses the reaction 4-CDP-2-C-methyl-D-erythritol 2-phosphate = 2-C-methyl-D-erythritol 2,4-cyclic diphosphate + CMP. It functions in the pathway isoprenoid biosynthesis; isopentenyl diphosphate biosynthesis via DXP pathway; isopentenyl diphosphate from 1-deoxy-D-xylulose 5-phosphate: step 2/6. The protein operates within isoprenoid biosynthesis; isopentenyl diphosphate biosynthesis via DXP pathway; isopentenyl diphosphate from 1-deoxy-D-xylulose 5-phosphate: step 4/6. In terms of biological role, bifunctional enzyme that catalyzes the formation of 4-diphosphocytidyl-2-C-methyl-D-erythritol from CTP and 2-C-methyl-D-erythritol 4-phosphate (MEP) (IspD), and catalyzes the conversion of 4-diphosphocytidyl-2-C-methyl-D-erythritol 2-phosphate (CDP-ME2P) to 2-C-methyl-D-erythritol 2,4-cyclodiphosphate (ME-CPP) with a corresponding release of cytidine 5-monophosphate (CMP) (IspF). This Wolbachia sp. subsp. Brugia malayi (strain TRS) protein is Bifunctional enzyme IspD/IspF.